Consider the following 1058-residue polypeptide: Carbamoyl phosphate synthase large chain (1058 aa).

A carboxyphosphate synthetic domain region spans residues 1-401 (MPKRTDIQKI…SLLKACRSLE (401 aa)). ATP contacts are provided by Arg-129, Arg-169, Gly-175, Gly-176, Arg-208, Ile-210, Glu-215, Gly-241, Ile-242, His-243, Gln-284, and Glu-298. In terms of domain architecture, ATP-grasp 1 spans 133–327 (KQLMEELEQP…IAKLAAKIAV (195 aa)). Gln-284, Glu-298, and Asn-300 together coordinate Mg(2+). 3 residues coordinate Mn(2+): Gln-284, Glu-298, and Asn-300. The interval 402–546 (IGVHHNEIPE…YSTYGWENES (145 aa)) is oligomerization domain. The segment at 547–929 (IRSDKESVLV…ALYKAFEASY (383 aa)) is carbamoyl phosphate synthetic domain. Residues 671–861 (EQALKELDIP…MAQVATKLIL (191 aa)) enclose the ATP-grasp 2 domain. 10 residues coordinate ATP: Arg-707, Ser-746, Ile-748, Glu-752, Gly-777, Val-778, His-779, Ser-780, Gln-820, and Glu-832. Mg(2+) contacts are provided by Gln-820, Glu-832, and Asn-834. Mn(2+) contacts are provided by Gln-820, Glu-832, and Asn-834. Residues 930–1058 (LHLPTFGNVV…ESRSFVTEAI (129 aa)) form the MGS-like domain. The segment at 930–1058 (LHLPTFGNVV…ESRSFVTEAI (129 aa)) is allosteric domain.

Belongs to the CarB family. Composed of two chains; the small (or glutamine) chain promotes the hydrolysis of glutamine to ammonia, which is used by the large (or ammonia) chain to synthesize carbamoyl phosphate. Tetramer of heterodimers (alpha,beta)4. Mg(2+) is required as a cofactor. Mn(2+) serves as cofactor.

The catalysed reaction is hydrogencarbonate + L-glutamine + 2 ATP + H2O = carbamoyl phosphate + L-glutamate + 2 ADP + phosphate + 2 H(+). The enzyme catalyses hydrogencarbonate + NH4(+) + 2 ATP = carbamoyl phosphate + 2 ADP + phosphate + 2 H(+). It participates in amino-acid biosynthesis; L-arginine biosynthesis; carbamoyl phosphate from bicarbonate: step 1/1. It functions in the pathway pyrimidine metabolism; UMP biosynthesis via de novo pathway; (S)-dihydroorotate from bicarbonate: step 1/3. Large subunit of the glutamine-dependent carbamoyl phosphate synthetase (CPSase). CPSase catalyzes the formation of carbamoyl phosphate from the ammonia moiety of glutamine, carbonate, and phosphate donated by ATP, constituting the first step of 2 biosynthetic pathways, one leading to arginine and/or urea and the other to pyrimidine nucleotides. The large subunit (synthetase) binds the substrates ammonia (free or transferred from glutamine from the small subunit), hydrogencarbonate and ATP and carries out an ATP-coupled ligase reaction, activating hydrogencarbonate by forming carboxy phosphate which reacts with ammonia to form carbamoyl phosphate. The polypeptide is Carbamoyl phosphate synthase large chain (Streptococcus pneumoniae serotype 19F (strain G54)).